The sequence spans 320 residues: MGEQQQQVERQPDLPPGFRFHPTDEEIITFYLAPKVVDSRGFCVAAIGEVDLNKCEPWDLPGKAKMNGEKEWYFYCQKDRKYPTGMRTNRATEAGYWKATGKDKEIFRDHHMLIGMKKTLVFYKGRAPKGDKTNWVMHEYRLADASPPPPPSSAEPPRQDDWAVCRIFHKSSGIKKPVPVAPHQVPAAANYQQQQQMAMASAGIIQVPMQMQMPSMSDQLQMLDDFSTTASLSLMAPPSYSTLPAGFPLQINSGAHPQQFVGNPSMYYHQQQQMDMAGGGFVVSEPSSLVVSPQDAADQNNNAADISSMACNMDAAIWKY.

Residues 14-170 form the NAC domain; that stretch reads LPPGFRFHPT…DWAVCRIFHK (157 aa). A DNA-binding region spans residues 114–176; sequence IGMKKTLVFY…IFHKSSGIKK (63 aa).

Forms homodimers. Forms heterodimers with NAC26. Expressed in developing seeds. Expressed in developing endosperm.

It localises to the nucleus. The protein localises to the endoplasmic reticulum. Transcription factor that acts redundantly with NAC26 to regulate the expression of genes involved in the biosynthesis of starch and storage proteins in grain. Directly binds to the promoters of starch synthase 1 (SS1), pullulanase (PUL), glutelin A1 (GLUA1), glutelins B4 and B5 (GLUB4 and GLUB5), alpha-globulin and 16 kDa prolamin, and activates their expression. This is NAC domain-containing protein 20 from Oryza sativa subsp. japonica (Rice).